The primary structure comprises 346 residues: MDQYCILGRIGEGAHGIVFKAKHVETGEIVALKKVALRRLEDGIPNQALREIKALQEIEDSQYVVQLKAVFPHGAGFVLAFEFMLSDLAEVVRHAQRPLAPAQVKSYLQMLLKGVAFCHANNIVHRDLKPANLLISASGQLKIADFGLARVFSPDGGRLYTHQVATRWYRAPELLYGARQYDQGVDLWAVGCIMGELLNGSPLFPGENDIEQLCCVLRILGTPSPRVWPEITELPDYNKISFKEQAPVPLEEVLPDASPQALDLLGQFLLYPPRQRIAASQALLHQYFFTAPLPAHPSELPIPQRPGGPAPKAHPGPPHVHDFHVDRPLEESLLNPELIRPFIPEG.

Positions 4-288 (YCILGRIGEG…ASQALLHQYF (285 aa)) constitute a Protein kinase domain. ATP is bound by residues 10 to 18 (IGEGAHGIV) and K33. D127 functions as the Proton acceptor in the catalytic mechanism. The segment at 298–324 (SELPIPQRPGGPAPKAHPGPPHVHDFH) is disordered. The span at 303-318 (PQRPGGPAPKAHPGPP) shows a compositional bias: pro residues.

It belongs to the protein kinase superfamily. CMGC Ser/Thr protein kinase family. CDC2/CDKX subfamily. In terms of assembly, monomer. Interacts with MAK. Interacts with TBC1D32.

It is found in the nucleus. The protein resides in the cytoplasm. The protein localises to the cell projection. Its subcellular location is the cilium. It catalyses the reaction L-seryl-[protein] + ATP = O-phospho-L-seryl-[protein] + ADP + H(+). The catalysed reaction is L-threonyl-[protein] + ATP = O-phospho-L-threonyl-[protein] + ADP + H(+). Involved in cell growth. Activates CDK2, a kinase involved in the control of the cell cycle, by phosphorylating residue 'Thr-160'. Required for high-level Shh responses in the developing neural tube. Together with TBC1D32, controls the structure of the primary cilium by coordinating assembly of the ciliary membrane and axoneme, allowing GLI2 to be properly activated in response to SHH signaling. The sequence is that of Cyclin-dependent kinase 20 (Cdk20) from Mus musculus (Mouse).